The following is a 252-amino-acid chain: Uracil-DNA glycosylase (252 aa).

The active-site Proton acceptor is the D87.

Belongs to the uracil-DNA glycosylase (UDG) superfamily. UNG family.

The protein localises to the host nucleus. It carries out the reaction Hydrolyzes single-stranded DNA or mismatched double-stranded DNA and polynucleotides, releasing free uracil.. In terms of biological role, excises uracil residues from the DNA which can arise as a result of misincorporation of dUMP residues by DNA polymerase or deamination of cytosines. Therefore may reduce deleterious uracil incorporation into the viral genome, particularly in terminally differentiated cells which lack DNA repair enzymes. In Alcelaphine herpesvirus 1 (strain C500) (AlHV-1), this protein is Uracil-DNA glycosylase (46).